A 231-amino-acid chain; its full sequence is Septum site-determining protein MinC (231 aa).

This sequence belongs to the MinC family. As to quaternary structure, interacts with MinD and FtsZ.

Its function is as follows. Cell division inhibitor that blocks the formation of polar Z ring septums. Rapidly oscillates between the poles of the cell to destabilize FtsZ filaments that have formed before they mature into polar Z rings. Prevents FtsZ polymerization. The chain is Septum site-determining protein MinC from Shigella flexneri.